We begin with the raw amino-acid sequence, 618 residues long: Dihydroxy-acid dehydratase (618 aa).

D81 is a binding site for Mg(2+). C122 contributes to the [2Fe-2S] cluster binding site. 2 residues coordinate Mg(2+): D123 and K124. K124 carries the N6-carboxylysine modification. [2Fe-2S] cluster is bound at residue C199. E495 serves as a coordination point for Mg(2+). S521 functions as the Proton acceptor in the catalytic mechanism.

Belongs to the IlvD/Edd family. Homodimer. [2Fe-2S] cluster is required as a cofactor. The cofactor is Mg(2+).

The catalysed reaction is (2R)-2,3-dihydroxy-3-methylbutanoate = 3-methyl-2-oxobutanoate + H2O. It carries out the reaction (2R,3R)-2,3-dihydroxy-3-methylpentanoate = (S)-3-methyl-2-oxopentanoate + H2O. The protein operates within amino-acid biosynthesis; L-isoleucine biosynthesis; L-isoleucine from 2-oxobutanoate: step 3/4. It participates in amino-acid biosynthesis; L-valine biosynthesis; L-valine from pyruvate: step 3/4. Functions in the biosynthesis of branched-chain amino acids. Catalyzes the dehydration of (2R,3R)-2,3-dihydroxy-3-methylpentanoate (2,3-dihydroxy-3-methylvalerate) into 2-oxo-3-methylpentanoate (2-oxo-3-methylvalerate) and of (2R)-2,3-dihydroxy-3-methylbutanoate (2,3-dihydroxyisovalerate) into 2-oxo-3-methylbutanoate (2-oxoisovalerate), the penultimate precursor to L-isoleucine and L-valine, respectively. This chain is Dihydroxy-acid dehydratase, found in Blochmanniella floridana.